The chain runs to 927 residues: UPF0182 protein bll7333 (927 aa).

7 helical membrane passes run 17-37 (AVVGLIIAALVIAIVLTLLAL), 65-85 (AVVFLAVWTATAVILLLNGWL), 134-154 (LALLVAAAEAGNWGVFLQFVY), 185-205 (WMMLALALSALFAAAIYLVHG), 220-240 (VIAHGSALLGLLFAVKAWSFG), 264-284 (VGLPALWLMIGLSGIAALAAW), and 297-317 (AAFLLVAIGSFVLSGLVPVLF).

This sequence belongs to the UPF0182 family.

The protein localises to the cell membrane. This is UPF0182 protein bll7333 from Bradyrhizobium diazoefficiens (strain JCM 10833 / BCRC 13528 / IAM 13628 / NBRC 14792 / USDA 110).